Here is a 169-residue protein sequence, read N- to C-terminus: Cell division inhibitor SulA (169 aa).

A compositionally biased stretch (polar residues) spans 1–15 (MFTSAHANRSAQASA). Residues 1–22 (MFTSAHANRSAQASASAGHYAH) are disordered. The segment at 106-112 (ALRTGNY) is ftsZ binding. The interval 162–169 (KIHSNLYH) is lon protease binding.

It belongs to the SulA family. As to quaternary structure, interacts with FtsZ. In terms of processing, is rapidly cleaved and degraded by the Lon protease once DNA damage is repaired.

Its function is as follows. Component of the SOS system and an inhibitor of cell division. Accumulation of SulA causes rapid cessation of cell division and the appearance of long, non-septate filaments. In the presence of GTP, binds a polymerization-competent form of FtsZ in a 1:1 ratio, thus inhibiting FtsZ polymerization and therefore preventing it from participating in the assembly of the Z ring. This mechanism prevents the premature segregation of damaged DNA to daughter cells during cell division. This chain is Cell division inhibitor SulA, found in Klebsiella pneumoniae (strain 342).